Consider the following 209-residue polypeptide: PRA1 family protein A2 (209 aa).

A run of 4 helical transmembrane segments spans residues 51–72 (LYYYRTNYFILVIFVLGLALVT), 76–98 (ALVGAALTALSIAFLNDSFAASF), 142–162 (RWVFVITFLTASLVMWFSSCG), and 163–183 (LLWVLYALLTSLAVIIVHASI).

Belongs to the PRA1 family.

Its subcellular location is the endosome membrane. May be involved in both secretory and endocytic intracellular trafficking in the endosomal/prevacuolar compartments. The chain is PRA1 family protein A2 (PRA1A2) from Arabidopsis thaliana (Mouse-ear cress).